The primary structure comprises 197 residues: Cell division protein SepF (197 aa).

2 disordered regions span residues 38–72 and 164–197; these read MPTP…TTPT and LSRE…AQAQ. Over residues 58–72 the composition is skewed to polar residues; that stretch reads TVASNFAMNSNTTPT. The span at 170–185 shows a compositional bias: low complexity; the sequence is PATPAAPARPAAPAPA.

Belongs to the SepF family. In terms of assembly, homodimer. Interacts with FtsZ.

It localises to the cytoplasm. Functionally, cell division protein that is part of the divisome complex and is recruited early to the Z-ring. Probably stimulates Z-ring formation, perhaps through the cross-linking of FtsZ protofilaments. Its function overlaps with FtsA. The polypeptide is Cell division protein SepF (Picosynechococcus sp. (strain ATCC 27264 / PCC 7002 / PR-6) (Agmenellum quadruplicatum)).